We begin with the raw amino-acid sequence, 898 residues long: Vacuolar membrane protease (898 aa).

Topologically, residues 1 to 14 are cytoplasmic; the sequence is MGIVDYLVAAVSFR. Residues 15–35 traverse the membrane as a helical segment; that stretch reads TLPTTFVAVLVYLAIFISVLI. The Vacuolar portion of the chain corresponds to 36–342; it reads TDELPATPKD…LFGQALIVFP (307 aa). N-linked (GlcNAc...) asparagine glycans are attached at residues Asn-50, Asn-103, and Asn-110. His-139 and Asp-151 together coordinate Zn(2+). The active-site Proton acceptor is Glu-183. A Zn(2+)-binding site is contributed by Glu-184. Asn-200 is a glycosylation site (N-linked (GlcNAc...) asparagine). Glu-209 and His-284 together coordinate Zn(2+). The chain crosses the membrane as a helical span at residues 343-365; the sequence is LSAMITFNIVFLVVGPIMLALLV. At 366–411 the chain is on the cytoplasmic side; it reads TFDIVARHRRQEMIGGGYEEQGFFARAWTSFKSFRWVGGFWKHAKF. A helical membrane pass occupies residues 412–432; sequence WVALAVTVGLQVLLCVGYLYI. A topological domain (vacuolar) is located at residue Asn-433. A helical transmembrane segment spans residues 434 to 454; it reads PLIAYSSSHIVLLSFLSLAYL. The Cytoplasmic portion of the chain corresponds to 455–479; the sequence is STYLVHNIPSPTDTYGSHLPEQQKQ. The chain crosses the membrane as a helical span at residues 480–500; that stretch reads AALFQLYFFTWILLLAATVVG. The Vacuolar portion of the chain corresponds to 501–509; that stretch reads AKLSVGSFY. A helical transmembrane segment spans residues 510–530; sequence ILSLWNAVLFAACAIGSIAGL. Residues 531–593 lie on the Cytoplasmic side of the membrane; it reads LSSHTVEGDA…PGGKEGEEVS (63 aa). Residues 594–614 traverse the membrane as a helical segment; sequence GAIGWWFVQFVLSVPAVVILV. The Vacuolar segment spans residues 615 to 635; that stretch reads SQLALLMLAATEQTLADGSPA. A helical transmembrane segment spans residues 636-656; that stretch reads VTVYGGASLMSVLAILPLAPF. At 657–664 the chain is on the cytoplasmic side; it reads ACKLHRRV. The chain crosses the membrane as a helical span at residues 665-685; that stretch reads AYVALVVLIASTAYAWLVFPF. At 686–898 the chain is on the vacuolar side; sequence SERAPLKVFF…LVEGYKAFAV (213 aa). N-linked (GlcNAc...) asparagine glycosylation is found at Asn-704, Asn-733, and Asn-764.

It belongs to the peptidase M28 family. Zn(2+) serves as cofactor.

It is found in the vacuole membrane. Its function is as follows. May be involved in vacuolar sorting and osmoregulation. The protein is Vacuolar membrane protease of Schizophyllum commune (strain H4-8 / FGSC 9210) (Split gill fungus).